The primary structure comprises 203 residues: MKDIEDLIEKAVELQSNGLISAQIADELNISRETVTWLLTRSKKEEATPAPKDISVDWSSIGKSAKRLHNISLALCDMVLETMEKVNAEVDVVVGIAANGVPLASMMAYELDADFAIYHRKGQGIVHAGHRGTISRNFGSVAGKNCIIVDDVITTGSTSMEVIEQLKEMDAKPRVVTVLVDKKGVDTIYNVPIQSLVRIARVD.

This sequence belongs to the purine/pyrimidine phosphoribosyltransferase family. GfcR subfamily.

This chain is Transcriptional regulator GfcR 2, found in Methanosarcina acetivorans (strain ATCC 35395 / DSM 2834 / JCM 12185 / C2A).